The chain runs to 44 residues: Large ribosomal subunit protein bL36 (44 aa).

Belongs to the bacterial ribosomal protein bL36 family.

In Pseudoalteromonas translucida (strain TAC 125), this protein is Large ribosomal subunit protein bL36.